A 94-amino-acid polypeptide reads, in one-letter code: Co-chaperonin GroES (94 aa).

This sequence belongs to the GroES chaperonin family. In terms of assembly, heptamer of 7 subunits arranged in a ring. Interacts with the chaperonin GroEL.

The protein localises to the cytoplasm. Functionally, together with the chaperonin GroEL, plays an essential role in assisting protein folding. The GroEL-GroES system forms a nano-cage that allows encapsulation of the non-native substrate proteins and provides a physical environment optimized to promote and accelerate protein folding. GroES binds to the apical surface of the GroEL ring, thereby capping the opening of the GroEL channel. The chain is Co-chaperonin GroES from Ehrlichia ruminantium (strain Gardel).